The chain runs to 37 residues: Large ribosomal subunit protein bL36 (37 aa).

The protein belongs to the bacterial ribosomal protein bL36 family.

The chain is Large ribosomal subunit protein bL36 from Nitrosococcus oceani (strain ATCC 19707 / BCRC 17464 / JCM 30415 / NCIMB 11848 / C-107).